The chain runs to 196 residues: Probable malonic semialdehyde reductase RutE (196 aa).

Belongs to the nitroreductase family. HadB/RutE subfamily. Requires FMN as cofactor.

The enzyme catalyses 3-hydroxypropanoate + NADP(+) = 3-oxopropanoate + NADPH + H(+). May reduce toxic product malonic semialdehyde to 3-hydroxypropionic acid, which is excreted. The polypeptide is Probable malonic semialdehyde reductase RutE (Escherichia coli O8 (strain IAI1)).